Reading from the N-terminus, the 230-residue chain is Sperm-associated antigen 7 homolog (230 aa).

A disordered region spans residues 1–45 (MADLLGSILSSMEKPPTVHDQESRRKAREQAARLKKLEEDERRKK). The segment covering 16-45 (PTVHDQESRRKAREQAARLKKLEEDERRKK) has biased composition (basic and acidic residues). The 64-residue stretch at 46-109 (AEFRKKMEKE…ESRYVMLFKK (64 aa)) folds into the R3H domain. Over residues 119 to 144 (EAYRKGEEWDPQKAEERRRLKEKAAL) the composition is skewed to basic and acidic residues. Disordered regions lie at residues 119–169 (EAYR…KYSH) and 185–230 (ANRA…GSSV). Ser-158 is subject to Phosphoserine. The span at 196 to 211 (NKRDTRSIEEAMNEIR) shows a compositional bias: basic and acidic residues.

The protein is Sperm-associated antigen 7 homolog (spag7) of Danio rerio (Zebrafish).